Consider the following 201-residue polypeptide: GTP cyclohydrolase 1 (201 aa).

Residues 1 to 20 are disordered; it reads MDATVKKMSPETSRPSREEA. Cysteine 91, histidine 94, and cysteine 162 together coordinate Zn(2+).

Belongs to the GTP cyclohydrolase I family. As to quaternary structure, homomer.

It carries out the reaction GTP + H2O = 7,8-dihydroneopterin 3'-triphosphate + formate + H(+). The protein operates within cofactor biosynthesis; 7,8-dihydroneopterin triphosphate biosynthesis; 7,8-dihydroneopterin triphosphate from GTP: step 1/1. In Allorhizobium ampelinum (strain ATCC BAA-846 / DSM 112012 / S4) (Agrobacterium vitis (strain S4)), this protein is GTP cyclohydrolase 1.